Consider the following 20-residue polypeptide: SNTSHQDFHSFYGTNLMIGG.

It belongs to the cytochrome c oxidase VIIb family. In terms of assembly, component of the cytochrome c oxidase (complex IV, CIV), a multisubunit enzyme composed of 14 subunits. The complex is composed of a catalytic core of 3 subunits MT-CO1, MT-CO2 and MT-CO3, encoded in the mitochondrial DNA, and 11 supernumerary subunits COX4I, COX5A, COX5B, COX6A, COX6B, COX6C, COX7A, COX7B, COX7C, COX8 and NDUFA4, which are encoded in the nuclear genome. The complex exists as a monomer or a dimer and forms supercomplexes (SCs) in the inner mitochondrial membrane with NADH-ubiquinone oxidoreductase (complex I, CI) and ubiquinol-cytochrome c oxidoreductase (cytochrome b-c1 complex, complex III, CIII), resulting in different assemblies (supercomplex SCI(1)III(2)IV(1) and megacomplex MCI(2)III(2)IV(2)).

It localises to the mitochondrion inner membrane. It catalyses the reaction 4 Fe(II)-[cytochrome c] + O2 + 8 H(+)(in) = 4 Fe(III)-[cytochrome c] + 2 H2O + 4 H(+)(out). The protein operates within energy metabolism; oxidative phosphorylation. Functionally, component of the cytochrome c oxidase, the last enzyme in the mitochondrial electron transport chain which drives oxidative phosphorylation. The respiratory chain contains 3 multisubunit complexes succinate dehydrogenase (complex II, CII), ubiquinol-cytochrome c oxidoreductase (cytochrome b-c1 complex, complex III, CIII) and cytochrome c oxidase (complex IV, CIV), that cooperate to transfer electrons derived from NADH and succinate to molecular oxygen, creating an electrochemical gradient over the inner membrane that drives transmembrane transport and the ATP synthase. Cytochrome c oxidase is the component of the respiratory chain that catalyzes the reduction of oxygen to water. Electrons originating from reduced cytochrome c in the intermembrane space (IMS) are transferred via the dinuclear copper A center (CU(A)) of subunit 2 and heme A of subunit 1 to the active site in subunit 1, a binuclear center (BNC) formed by heme A3 and copper B (CU(B)). The BNC reduces molecular oxygen to 2 water molecules using 4 electrons from cytochrome c in the IMS and 4 protons from the mitochondrial matrix. This Thunnus obesus (Bigeye tuna) protein is Cytochrome c oxidase subunit 7B-liver, mitochondrial.